Here is a 565-residue protein sequence, read N- to C-terminus: O-fucosyltransferase 7 (565 aa).

A helical; Signal-anchor for type II membrane protein membrane pass occupies residues 17-37; sequence VLIWAICVMTLLCFLTVHIYV. 5 N-linked (GlcNAc...) asparagine glycosylation sites follow: Asn62, Asn73, Asn104, Asn124, and Asn190. 327 to 329 lines the substrate pocket; the sequence is HLR. N-linked (GlcNAc...) asparagine glycosylation occurs at Asn441. The interval 515-565 is disordered; sequence NEIHKTRQGSPRRRKGPASGTKGLERHRSEESFYENPLPDCLCQRDPSKAR. Residues 520–530 are compositionally biased toward basic residues; it reads TRQGSPRRRKG.

Belongs to the glycosyltransferase GT106 family.

The protein resides in the membrane. It participates in glycan metabolism. The protein is O-fucosyltransferase 7 of Arabidopsis thaliana (Mouse-ear cress).